Consider the following 337-residue polypeptide: Visual pigment-like receptor peropsin (337 aa).

Topologically, residues 1–26 are extracellular; it reads MLRNNLGNSSDSKNEDGSVFSQTEHN. Residue asparagine 8 is glycosylated (N-linked (GlcNAc...) asparagine). Residues 27-49 traverse the membrane as a helical segment; the sequence is IVATYLIMAGMISIISNIIVLGI. Residues 50-61 lie on the Cytoplasmic side of the membrane; it reads FIKYKELRTPTN. A helical membrane pass occupies residues 62-87; sequence AIIINLAVTDIGVSSIGYPMSAASDL. Residues 88–101 lie on the Extracellular side of the membrane; that stretch reads YGSWKFGYAGCQVY. Cysteine 98 and cysteine 175 are oxidised to a cystine. A helical transmembrane segment spans residues 102-121; the sequence is AGLNIFFGMASIGLLTVVAV. Over 122–140 the chain is Cytoplasmic; the sequence is DRYLTICLPDVGRRMTTNT. A helical transmembrane segment spans residues 141–164; the sequence is YIGLILGAWINGLFWALMPIIGWA. Topologically, residues 165 to 188 are extracellular; that stretch reads SYAPDPTGATCTINWRKNDRSFVS. The helical transmembrane segment at 189 to 212 threads the bilayer; it reads YTMTVIAINFIVPLTVMFYCYYHV. Residues 213 to 240 are Cytoplasmic-facing; sequence TLSIKHHTTSDCTESLNRDWSDQIDVTK. A helical transmembrane segment spans residues 241 to 264; the sequence is MSVIMICMFLVAWSPYSIVCLWAS. Over 265 to 272 the chain is Extracellular; it reads FGDPKKIP. A helical transmembrane segment spans residues 273 to 297; the sequence is PPMAIIAPLFAKSSTFYNPCIYVVA. At lysine 284 the chain carries N6-(retinylidene)lysine. Residues 298–337 are Cytoplasmic-facing; sequence NKKFRRAMLAMFKCQTHQTMPVTSILPMDVSQNPLASGRI.

The protein belongs to the G-protein coupled receptor 1 family. Opsin subfamily. Found only in the eye, where it is localized to the retinal pigment epithelium (RPE). In the RPE, it is localized to the microvilli that surround the photoreceptor outer segments.

The protein resides in the membrane. Its function is as follows. May play a role in rpe physiology either by detecting light directly or by monitoring the concentration of retinoids or other photoreceptor-derived compounds. This is Visual pigment-like receptor peropsin (RRH) from Homo sapiens (Human).